The chain runs to 322 residues: Ferrochelatase (322 aa).

The Fe cation site is built by His194 and Glu275.

Belongs to the ferrochelatase family.

The protein localises to the cytoplasm. The catalysed reaction is heme b + 2 H(+) = protoporphyrin IX + Fe(2+). The protein operates within porphyrin-containing compound metabolism; protoheme biosynthesis; protoheme from protoporphyrin-IX: step 1/1. Functionally, catalyzes the ferrous insertion into protoporphyrin IX. In Yersinia enterocolitica, this protein is Ferrochelatase.